Consider the following 449-residue polypeptide: Trigger factor (449 aa).

The PPIase FKBP-type domain maps to 162-243 (GEFVTINITA…ITATKQRELP (82 aa)). Positions 428–437 (GNEIDPKEYF) are enriched in basic and acidic residues. The disordered stretch occupies residues 428 to 449 (GNEIDPKEYFGEEEVAETESEA). Residues 438 to 449 (GEEEVAETESEA) show a composition bias toward acidic residues.

Belongs to the FKBP-type PPIase family. Tig subfamily.

It localises to the cytoplasm. It catalyses the reaction [protein]-peptidylproline (omega=180) = [protein]-peptidylproline (omega=0). In terms of biological role, involved in protein export. Acts as a chaperone by maintaining the newly synthesized protein in an open conformation. Functions as a peptidyl-prolyl cis-trans isomerase. This Corynebacterium glutamicum (strain R) protein is Trigger factor.